Reading from the N-terminus, the 295-residue chain is Protease HtpX (295 aa).

Transmembrane regions (helical) follow at residues 4–24 (ILLFVATNLAVVLVASITLSL) and 41–61 (GQLLVFCAVFGFAGSLVSLFI). Residue His147 coordinates Zn(2+). The active site involves Glu148. His151 is a binding site for Zn(2+). A run of 2 helical transmembrane segments spans residues 158–178 (VTMALVQGVVNTFVMFFARII) and 198–218 (FVATIVAELVLGILASIIVMW). Glu224 lines the Zn(2+) pocket.

This sequence belongs to the peptidase M48B family. Requires Zn(2+) as cofactor.

It is found in the cell inner membrane. The chain is Protease HtpX from Pseudomonas entomophila (strain L48).